Here is a 900-residue protein sequence, read N- to C-terminus: Alanine--tRNA ligase (900 aa).

Zn(2+) contacts are provided by His-567, His-571, Cys-671, and His-675.

Belongs to the class-II aminoacyl-tRNA synthetase family. The cofactor is Zn(2+).

Its subcellular location is the cytoplasm. It catalyses the reaction tRNA(Ala) + L-alanine + ATP = L-alanyl-tRNA(Ala) + AMP + diphosphate. Functionally, catalyzes the attachment of alanine to tRNA(Ala) in a two-step reaction: alanine is first activated by ATP to form Ala-AMP and then transferred to the acceptor end of tRNA(Ala). Also edits incorrectly charged Ser-tRNA(Ala) and Gly-tRNA(Ala) via its editing domain. The chain is Alanine--tRNA ligase from Mycoplasma pneumoniae (strain ATCC 29342 / M129 / Subtype 1) (Mycoplasmoides pneumoniae).